We begin with the raw amino-acid sequence, 207 residues long: LexA repressor (207 aa).

Positions 28-48 (VREIGEAVGLASSSTVHGHLS) form a DNA-binding region, H-T-H motif. Active-site for autocatalytic cleavage activity residues include S130 and K168.

It belongs to the peptidase S24 family. As to quaternary structure, homodimer.

The enzyme catalyses Hydrolysis of Ala-|-Gly bond in repressor LexA.. Functionally, represses a number of genes involved in the response to DNA damage (SOS response), including recA and lexA. In the presence of single-stranded DNA, RecA interacts with LexA causing an autocatalytic cleavage which disrupts the DNA-binding part of LexA, leading to derepression of the SOS regulon and eventually DNA repair. The chain is LexA repressor from Staphylococcus carnosus (strain TM300).